Here is an 89-residue protein sequence, read N- to C-terminus: Small ribosomal subunit protein uS15 (89 aa).

This sequence belongs to the universal ribosomal protein uS15 family. As to quaternary structure, part of the 30S ribosomal subunit. Forms a bridge to the 50S subunit in the 70S ribosome, contacting the 23S rRNA.

One of the primary rRNA binding proteins, it binds directly to 16S rRNA where it helps nucleate assembly of the platform of the 30S subunit by binding and bridging several RNA helices of the 16S rRNA. Functionally, forms an intersubunit bridge (bridge B4) with the 23S rRNA of the 50S subunit in the ribosome. The chain is Small ribosomal subunit protein uS15 from Rhizobium leguminosarum bv. trifolii (strain WSM2304).